Here is a 126-residue protein sequence, read N- to C-terminus: MAVSKNEILETISNMTVMEVVELIEAMEEKFNVSAAAAAVAVAAPAAGAGAAAAEEQTEFTVVMTSFGSNKVNVIKAIRGITGLGLKEAKDLVEGAPSTVKEGVSKDEAASIKKELEEAGATVEVK.

This sequence belongs to the bacterial ribosomal protein bL12 family. Homodimer. Part of the ribosomal stalk of the 50S ribosomal subunit. Forms a multimeric L10(L12)X complex, where L10 forms an elongated spine to which 2 to 4 L12 dimers bind in a sequential fashion. Binds GTP-bound translation factors.

In terms of biological role, forms part of the ribosomal stalk which helps the ribosome interact with GTP-bound translation factors. Is thus essential for accurate translation. The sequence is that of Large ribosomal subunit protein bL12 from Legionella pneumophila (strain Paris).